The chain runs to 203 residues: FMN-dependent NADH:quinone oxidoreductase 3 (203 aa).

FMN is bound by residues S9, 15-17 (SAS), 95-98 (MYNF), and 139-142 (TAGG).

This sequence belongs to the azoreductase type 1 family. In terms of assembly, homodimer. FMN serves as cofactor.

The enzyme catalyses 2 a quinone + NADH + H(+) = 2 a 1,4-benzosemiquinone + NAD(+). The catalysed reaction is N,N-dimethyl-1,4-phenylenediamine + anthranilate + 2 NAD(+) = 2-(4-dimethylaminophenyl)diazenylbenzoate + 2 NADH + 2 H(+). Quinone reductase that provides resistance to thiol-specific stress caused by electrophilic quinones. In terms of biological role, also exhibits azoreductase activity. Catalyzes the reductive cleavage of the azo bond in aromatic azo compounds to the corresponding amines. The chain is FMN-dependent NADH:quinone oxidoreductase 3 from Pseudomonas fluorescens (strain Pf0-1).